A 341-amino-acid polypeptide reads, in one-letter code: Ketol-acid reductoisomerase (NADP(+)) (341 aa).

In terms of domain architecture, KARI N-terminal Rossmann spans 2–182; that stretch reads AKIYYNDDAD…GGTRAGVIET (181 aa). Residues 25–28, Ser-51, Ser-53, and 83–86 each bind NADP(+); these read YGSQ and DQVQ. The active site involves His-108. Gly-134 contributes to the NADP(+) binding site. Positions 183 to 328 constitute a KARI C-terminal knotted domain; the sequence is TFTEETESDL…RKLRSLFAWE (146 aa). Mg(2+)-binding residues include Asp-191, Glu-195, Glu-227, and Glu-231. Ser-252 is a binding site for substrate.

The protein belongs to the ketol-acid reductoisomerase family. The cofactor is Mg(2+).

The enzyme catalyses (2R)-2,3-dihydroxy-3-methylbutanoate + NADP(+) = (2S)-2-acetolactate + NADPH + H(+). The catalysed reaction is (2R,3R)-2,3-dihydroxy-3-methylpentanoate + NADP(+) = (S)-2-ethyl-2-hydroxy-3-oxobutanoate + NADPH + H(+). It participates in amino-acid biosynthesis; L-isoleucine biosynthesis; L-isoleucine from 2-oxobutanoate: step 2/4. Its pathway is amino-acid biosynthesis; L-valine biosynthesis; L-valine from pyruvate: step 2/4. Its function is as follows. Involved in the biosynthesis of branched-chain amino acids (BCAA). Catalyzes an alkyl-migration followed by a ketol-acid reduction of (S)-2-acetolactate (S2AL) to yield (R)-2,3-dihydroxy-isovalerate. In the isomerase reaction, S2AL is rearranged via a Mg-dependent methyl migration to produce 3-hydroxy-3-methyl-2-ketobutyrate (HMKB). In the reductase reaction, this 2-ketoacid undergoes a metal-dependent reduction by NADPH to yield (R)-2,3-dihydroxy-isovalerate. The protein is Ketol-acid reductoisomerase (NADP(+)) of Kocuria rhizophila (strain ATCC 9341 / DSM 348 / NBRC 103217 / DC2201).